The primary structure comprises 294 residues: Dof zinc finger protein DOF4.1 (294 aa).

Residues 68-122 form a Dof-type zinc finger; it reads RNCPRCNSSNTKFCYYNNYSLAQPRYLCKSCRRYWTEGGSLRNVPVGGGSRKNKK. Residues Cys70, Cys73, Cys95, and Cys98 each coordinate Zn(2+). Disordered stretches follow at residues 109–178 and 247–294; these read RNVP…DKRA and MYPY…GPTW. Composition is skewed to polar residues over residues 126 to 136 and 157 to 173; these read PNSSTSSSTKN and KTHQ…SSPM. Residues 251-273 are compositionally biased toward basic and acidic residues; it reads GDHEDRQQHHHVRHDDGNKKREG. The segment covering 284–294 has biased composition (gly residues); sequence ILGGDSGGPTW.

It localises to the nucleus. Its function is as follows. Transcription factor that binds specifically to a 5'-AA[AG]G-3' consensus core sequence. The sequence is that of Dof zinc finger protein DOF4.1 (DOF4.1) from Arabidopsis thaliana (Mouse-ear cress).